The sequence spans 390 residues: GTPase Obg (390 aa).

Residues Met1–Leu159 enclose the Obg domain. An OBG-type G domain is found at Ala160–Glu333. GTP-binding positions include Gly166 to Ser173, Phe191 to Ile195, Asp213 to Gly216, Asn283 to Asp286, and Ser314 to Ile316. Mg(2+) is bound by residues Ser173 and Thr193. The span at Thr367–Asp382 shows a compositional bias: acidic residues. Residues Thr367–Asp390 are disordered.

Belongs to the TRAFAC class OBG-HflX-like GTPase superfamily. OBG GTPase family. As to quaternary structure, monomer. Mg(2+) is required as a cofactor.

It localises to the cytoplasm. Its function is as follows. An essential GTPase which binds GTP, GDP and possibly (p)ppGpp with moderate affinity, with high nucleotide exchange rates and a fairly low GTP hydrolysis rate. Plays a role in control of the cell cycle, stress response, ribosome biogenesis and in those bacteria that undergo differentiation, in morphogenesis control. The polypeptide is GTPase Obg (Vibrio parahaemolyticus serotype O3:K6 (strain RIMD 2210633)).